The following is a 131-amino-acid chain: Profilin-1 (131 aa).

A disulfide bridge links Cys-13 with Cys-115. The short motif at 81–97 (RVIRGKKGAGGITIKKT) is the Involved in PIP2 interaction element. Position 111 is a phosphothreonine (Thr-111).

It belongs to the profilin family. As to quaternary structure, occurs in many kinds of cells as a complex with monomeric actin in a 1:1 ratio.

It is found in the cytoplasm. Its subcellular location is the cytoskeleton. In terms of biological role, binds to actin and affects the structure of the cytoskeleton. At high concentrations, profilin prevents the polymerization of actin, whereas it enhances it at low concentrations. By binding to PIP2, it inhibits the formation of IP3 and DG. The protein is Profilin-1 (PRO1) of Phleum pratense (Common timothy).